The chain runs to 99 residues: MTESKRILADVLLRPVITEKATALMEQRKYVFEVLPTATKPLIRAAVEEMFRVRVTSVNTLKPPRKQRRVGRFVGYRTRPKRAIVTLAEGDSITLFPDT.

This sequence belongs to the universal ribosomal protein uL23 family. As to quaternary structure, part of the 50S ribosomal subunit. Contacts protein L29, and trigger factor when it is bound to the ribosome.

Functionally, one of the early assembly proteins it binds 23S rRNA. One of the proteins that surrounds the polypeptide exit tunnel on the outside of the ribosome. Forms the main docking site for trigger factor binding to the ribosome. The polypeptide is Large ribosomal subunit protein uL23 (Synechococcus sp. (strain JA-2-3B'a(2-13)) (Cyanobacteria bacterium Yellowstone B-Prime)).